Consider the following 220-residue polypeptide: 5'(3')-deoxyribonucleotidase, mitochondrial (220 aa).

A mitochondrion-targeting transit peptide spans 1–23 (MHRLRGCCARPRGAPLRAERSRA). The Nucleophile role is filled by aspartate 33. Aspartate 33 and aspartate 35 together coordinate Mg(2+). Residue aspartate 35 is the Proton donor of the active site. Substrate is bound by residues aspartate 35, phenylalanine 41, phenylalanine 67, tryptophan 68, valine 69, tryptophan 88, threonine 122, and lysine 157. Position 168 (aspartate 168) interacts with Mg(2+).

It belongs to the 5'(3')-deoxyribonucleotidase family. In terms of assembly, homodimer. Requires Mg(2+) as cofactor.

It is found in the mitochondrion. Its function is as follows. Dephosphorylates specifically the 5' and 2'(3')-phosphates of uracil and thymine deoxyribonucleotides, and so protects mitochondrial DNA replication from excess dTTP. Has only marginal activity towards dIMP and dGMP. In Mus musculus (Mouse), this protein is 5'(3')-deoxyribonucleotidase, mitochondrial (Nt5m).